We begin with the raw amino-acid sequence, 736 residues long: 3',5'-cyclic-AMP phosphodiesterase 4B (736 aa).

Disordered regions lie at residues 51–77 (QLPPLSQRQSERARTPEGDGISRPTTL) and 96–116 (DVENGPSPGRSPLDPQASSSS). The residue at position 56 (S56) is a Phosphoserine. S290 is modified (phosphoserine). One can recognise a PDEase domain in the interval 330 to 659 (VNTENEDHLA…NWYQSMIPQS (330 aa)). H406 functions as the Proton donor in the catalytic mechanism. H406 contributes to the 3',5'-cyclic AMP binding site. AMP is bound by residues H406 and H410. Zn(2+) is bound by residues H410, H446, D447, and D564. AMP is bound by residues D447, D564, Q615, and F618. D447 is a binding site for Mg(2+). Residue D447 coordinates Mn(2+). 3',5'-cyclic AMP-binding residues include Q615 and F618. A phosphoserine mark is found at S659 and S661. Residues 685 to 736 (EEEDSEGPEKEGEGPNYFSSTKTLCVIDPENRDSLEETDIDIATEDKSLIDT) form a disordered region.

This sequence belongs to the cyclic nucleotide phosphodiesterase family. PDE4 subfamily. As to quaternary structure, interacts with DISC1. Zn(2+) is required as a cofactor. Mg(2+) serves as cofactor. The cofactor is Mn(2+). As to expression, widely expressed. In terms of tissue distribution, expressed in brain, heart, lung and liver. Expressed in liver and brain.

The protein localises to the cytoplasm. Its subcellular location is the cell membrane. It carries out the reaction 3',5'-cyclic AMP + H2O = AMP + H(+). Its pathway is purine metabolism; 3',5'-cyclic AMP degradation; AMP from 3',5'-cyclic AMP: step 1/1. Its activity is regulated as follows. Inhibited by rolipram. Hydrolyzes the second messenger cAMP, which is a key regulator of many important physiological processes. The sequence is that of 3',5'-cyclic-AMP phosphodiesterase 4B from Rattus norvegicus (Rat).